The chain runs to 257 residues: 3-deoxy-manno-octulosonate cytidylyltransferase (257 aa).

It belongs to the KdsB family.

The protein resides in the cytoplasm. It catalyses the reaction 3-deoxy-alpha-D-manno-oct-2-ulosonate + CTP = CMP-3-deoxy-beta-D-manno-octulosonate + diphosphate. It functions in the pathway nucleotide-sugar biosynthesis; CMP-3-deoxy-D-manno-octulosonate biosynthesis; CMP-3-deoxy-D-manno-octulosonate from 3-deoxy-D-manno-octulosonate and CTP: step 1/1. It participates in bacterial outer membrane biogenesis; lipopolysaccharide biosynthesis. Its function is as follows. Activates KDO (a required 8-carbon sugar) for incorporation into bacterial lipopolysaccharide in Gram-negative bacteria. The chain is 3-deoxy-manno-octulosonate cytidylyltransferase from Halorhodospira halophila (strain DSM 244 / SL1) (Ectothiorhodospira halophila (strain DSM 244 / SL1)).